A 68-amino-acid chain; its full sequence is Sec-independent protein translocase protein TatA (68 aa).

A helical transmembrane segment spans residues 1-21 (MGSLSIWHWLIVLLIVVLVFG). Residues 42-68 (GMNEGAKDGQPPAKDAGRIIDGEADKK) are disordered. Basic and acidic residues predominate over residues 56 to 68 (DAGRIIDGEADKK).

It belongs to the TatA/E family. In terms of assembly, the Tat system comprises two distinct complexes: a TatABC complex, containing multiple copies of TatA, TatB and TatC subunits, and a separate TatA complex, containing only TatA subunits. Substrates initially bind to the TatABC complex, which probably triggers association of the separate TatA complex to form the active translocon.

The protein resides in the cell inner membrane. Part of the twin-arginine translocation (Tat) system that transports large folded proteins containing a characteristic twin-arginine motif in their signal peptide across membranes. TatA could form the protein-conducting channel of the Tat system. This is Sec-independent protein translocase protein TatA from Chromobacterium violaceum (strain ATCC 12472 / DSM 30191 / JCM 1249 / CCUG 213 / NBRC 12614 / NCIMB 9131 / NCTC 9757 / MK).